Reading from the N-terminus, the 642-residue chain is 1-deoxy-D-xylulose-5-phosphate synthase 2 (642 aa).

Thiamine diphosphate-binding positions include H73 and 113-115; that span reads SHA. D144 contributes to the Mg(2+) binding site. Residues 145–146, N174, Y285, and E366 each bind thiamine diphosphate; that span reads GA. N174 lines the Mg(2+) pocket.

This sequence belongs to the transketolase family. DXPS subfamily. Homodimer. It depends on Mg(2+) as a cofactor. Requires thiamine diphosphate as cofactor.

It carries out the reaction D-glyceraldehyde 3-phosphate + pyruvate + H(+) = 1-deoxy-D-xylulose 5-phosphate + CO2. It functions in the pathway metabolic intermediate biosynthesis; 1-deoxy-D-xylulose 5-phosphate biosynthesis; 1-deoxy-D-xylulose 5-phosphate from D-glyceraldehyde 3-phosphate and pyruvate: step 1/1. In terms of biological role, catalyzes the acyloin condensation reaction between C atoms 2 and 3 of pyruvate and glyceraldehyde 3-phosphate to yield 1-deoxy-D-xylulose-5-phosphate (DXP). In Streptomyces avermitilis (strain ATCC 31267 / DSM 46492 / JCM 5070 / NBRC 14893 / NCIMB 12804 / NRRL 8165 / MA-4680), this protein is 1-deoxy-D-xylulose-5-phosphate synthase 2.